We begin with the raw amino-acid sequence, 156 residues long: Putative pre-16S rRNA nuclease (156 aa).

It belongs to the YqgF nuclease family.

It is found in the cytoplasm. In terms of biological role, could be a nuclease involved in processing of the 5'-end of pre-16S rRNA. The polypeptide is Putative pre-16S rRNA nuclease (Aromatoleum aromaticum (strain DSM 19018 / LMG 30748 / EbN1) (Azoarcus sp. (strain EbN1))).